We begin with the raw amino-acid sequence, 89 residues long: Small ribosomal subunit protein uS15 (89 aa).

This sequence belongs to the universal ribosomal protein uS15 family. In terms of assembly, part of the 30S ribosomal subunit. Forms a bridge to the 50S subunit in the 70S ribosome, contacting the 23S rRNA.

Its function is as follows. One of the primary rRNA binding proteins, it binds directly to 16S rRNA where it helps nucleate assembly of the platform of the 30S subunit by binding and bridging several RNA helices of the 16S rRNA. In terms of biological role, forms an intersubunit bridge (bridge B4) with the 23S rRNA of the 50S subunit in the ribosome. The sequence is that of Small ribosomal subunit protein uS15 from Chlamydia felis (strain Fe/C-56) (Chlamydophila felis).